A 277-amino-acid chain; its full sequence is Glutamate racemase (277 aa).

Residues 25-26 and 57-58 contribute to the substrate site; these read DS and YG. Catalysis depends on C89, which acts as the Proton donor/acceptor. Residue 90-91 participates in substrate binding; the sequence is NT. C204 serves as the catalytic Proton donor/acceptor. A substrate-binding site is contributed by 205-206; the sequence is TH.

It belongs to the aspartate/glutamate racemases family.

The catalysed reaction is L-glutamate = D-glutamate. Its pathway is cell wall biogenesis; peptidoglycan biosynthesis. Provides the (R)-glutamate required for cell wall biosynthesis. This is Glutamate racemase from Brucella abortus (strain 2308).